A 5209-amino-acid polypeptide reads, in one-letter code: E3 ubiquitin-protein ligase rnf213-alpha (5209 aa).

Polar residues-rich tracts occupy residues 27–52 and 61–72; these read SQSYETTQGTPHDKSQTPSIVPQITN and ESKSLEIQNANV. The segment at 27–373 is disordered; that stretch reads SQSYETTQGT…KRNTRSTQHI (347 aa). The segment covering 85 to 101 has biased composition (basic residues); it reads PKKKKRKKRKKEKKKKS. Over residues 108-118 the composition is skewed to low complexity; it reads SSLTSDLSDIS. A compositionally biased stretch (basic and acidic residues) spans 119 to 128; that stretch reads LTDKEKKMDT. 2 stretches are compositionally biased toward polar residues: residues 167 to 177 and 184 to 195; these read LSASALTTGSS and IGTTQKPVSASA. Positions 205 to 218 are enriched in basic and acidic residues; it reads QTKEEKVKCKDEGQ. Polar residues predominate over residues 219-243; that stretch reads KSLSAKAQHTPNANVDQNANVQSDA. Low complexity predominate over residues 256-269; it reads KSSSVKTKPSKSTV. 2 stretches are compositionally biased toward basic and acidic residues: residues 271–288 and 330–352; these read DPKKTESEKQKSGERDNE and MKVEKKPAGGKKDSSADQKSKES. ATP is bound by residues 2036-2041, glutamate 2135, aspartate 2193, arginine 2252, lysine 2535, and serine 2610; that span reads GVGKSL. Zn(2+) contacts are provided by cysteine 4005, cysteine 4008, cysteine 4020, histidine 4022, cysteine 4025, cysteine 4028, cysteine 4040, cysteine 4043, cysteine 4507, and histidine 4511. An RING-type zinc finger spans residues 4005-4043; the sequence is CPVCMGDPRDPLSLPCDHIYCLTCIRQWLVPGQMHCPLC. Residues 4487-4557 form an RZ-type zinc finger; the sequence is MPDDMLAVAQ…MQIQADRTQS (71 aa). Cysteine 4518 acts as the Nucleophile; for E3 ubiquitin-lipopolysaccharide ligase activity in catalysis. Positions 4527 and 4530 each coordinate Zn(2+).

It belongs to the AAA ATPase family.

It is found in the cytoplasm. It localises to the cytosol. The protein resides in the lipid droplet. The catalysed reaction is S-ubiquitinyl-[E2 ubiquitin-conjugating enzyme]-L-cysteine + [acceptor protein]-L-lysine = [E2 ubiquitin-conjugating enzyme]-L-cysteine + N(6)-ubiquitinyl-[acceptor protein]-L-lysine.. It carries out the reaction ATP + H2O = ADP + phosphate + H(+). It functions in the pathway protein modification; protein ubiquitination. Atypical E3 ubiquitin ligase that can catalyze ubiquitination of both proteins and lipids, and which is involved in various processes, such as lipid metabolism, angiogenesis and cell-autonomous immunity. Acts as a key immune sensor by catalyzing ubiquitination of the lipid A moiety of bacterial lipopolysaccharide (LPS) via its RZ-type zinc-finger: restricts the proliferation of cytosolic bacteria, such as Salmonella, by generating the bacterial ubiquitin coat through the ubiquitination of LPS. Ubiquitination of LPS triggers cell-autonomous immunity, such as antibacterial autophagy, leading to degradation of the microbial invader. Involved in lipid metabolism by regulating fat storage and lipid droplet formation; act by inhibiting the lipolytic process. Also regulates lipotoxicity by inhibiting desaturation of fatty acids. Also acts as an E3 ubiquitin-protein ligase via its RING-type zinc finger. Involved in the non-canonical Wnt signaling pathway in vascular development: acts by mediating ubiquitination and degradation of proteins downstream of rspo3, leading to inhibit the non-canonical Wnt signaling pathway and promoting vessel regression. Also has ATPase activity; ATPase activity is required for ubiquitination of LPS. Also involved in neuromuscular regulation. This is E3 ubiquitin-protein ligase rnf213-alpha from Danio rerio (Zebrafish).